The chain runs to 1006 residues: Probable beta-galactosidase A (1006 aa).

The first 18 residues, 1–18 (MKLLSVCAIALLAAQAAG), serve as a signal peptide directing secretion. The substrate site is built by Tyr96, Asn140, Ala141, and Glu142. The N-linked (GlcNAc...) asparagine glycan is linked to Asn156. Residue Asn199 coordinates substrate. Residue Glu200 is the Proton donor of the active site. Cys205 and Cys206 are disulfide-bonded. Residue Tyr260 coordinates substrate. A disulfide bridge connects residues Cys266 and Cys315. Glu298 serves as the catalytic Nucleophile. Tyr364 is a binding site for substrate. Asn373, Asn402, Asn422, Asn622, Asn760, Asn777, and Asn914 each carry an N-linked (GlcNAc...) asparagine glycan.

This sequence belongs to the glycosyl hydrolase 35 family.

It is found in the secreted. It catalyses the reaction Hydrolysis of terminal non-reducing beta-D-galactose residues in beta-D-galactosides.. Functionally, cleaves beta-linked terminal galactosyl residues from gangliosides, glycoproteins, and glycosaminoglycans. This chain is Probable beta-galactosidase A (lacA), found in Aspergillus fumigatus (strain CBS 144.89 / FGSC A1163 / CEA10) (Neosartorya fumigata).